The following is a 282-amino-acid chain: MVDTLPTPKHAPLAGVIGWPVAHSRSPRLHGHWLERYGIAGHYVSLPVMPEHLAEVLRAMPHMGFVGANVTIPHKESVLALADVVTDRAALIGAANTLIFRADGKIHADNTDGYGFIANIRQHAPDWIPDLGPAAVIGAGGAARAVVASLLESGVPELRIANRTRIRAEQIRAEFGAKVVVYDWAQAGNMLEGAMTVVNATSMGMEGKPPLRVPLEALAPSTLVTDLVYTPLMTPFLAEAQARGCEVVDGLGMLLHQAAPGFERWFGQRPEVDDDLRRAVLA.

Residues 24 to 26 (SRS) and T71 each bind shikimate. The Proton acceptor role is filled by K75. D87 serves as a coordination point for NADP(+). Shikimate contacts are provided by N96 and D112. NADP(+) is bound by residues 138–142 (GAGGA), 162–167 (NRTRIR), and L227. Residue Y229 coordinates shikimate. G250 contacts NADP(+).

It belongs to the shikimate dehydrogenase family. As to quaternary structure, homodimer.

It carries out the reaction shikimate + NADP(+) = 3-dehydroshikimate + NADPH + H(+). It participates in metabolic intermediate biosynthesis; chorismate biosynthesis; chorismate from D-erythrose 4-phosphate and phosphoenolpyruvate: step 4/7. Involved in the biosynthesis of the chorismate, which leads to the biosynthesis of aromatic amino acids. Catalyzes the reversible NADPH linked reduction of 3-dehydroshikimate (DHSA) to yield shikimate (SA). This Paracoccus denitrificans (strain Pd 1222) protein is Shikimate dehydrogenase (NADP(+)).